Consider the following 251-residue polypeptide: Meso-2,3-butanediol dehydrogenase (251 aa).

NAD(+)-binding residues include Asn-15, Met-17, Asp-36, Asp-60, Val-61, and Asn-87. Positions 138, 140, and 151 each coordinate (R)-acetoin. Residue Ser-138 coordinates (S)-acetoin. Positions 151, 155, 184, and 186 each coordinate NAD(+). Residue Tyr-151 participates in (S)-acetoin binding. Tyr-151 acts as the Proton acceptor in catalysis.

Belongs to the short-chain dehydrogenases/reductases (SDR) family. In terms of assembly, homotetramer; dimer of dimers.

It carries out the reaction (R,S)-butane-2,3-diol + NAD(+) = (R)-acetoin + NADH + H(+). It catalyses the reaction (S,S)-butane-2,3-diol + NAD(+) = (S)-acetoin + NADH + H(+). The catalysed reaction is (S)-acetoin + NAD(+) = diacetyl + NADH + H(+). Oxidation of meso-2,3-butanediol is enhanced in the presence of Fe(2+). Reduction of diacetyl and (3S/3R)-acetoin is slightly enhanced in the presence of Mg(2+) and Mn(2+). Activity is inhibited by several metal ions, particularly Fe(3+) for reduction of diacetyl and acetoin. Its function is as follows. Catalyzes the NAD-dependent oxidation of meso-2,3-butanediol to (3R)-acetoin, and of (2S,3S)-2,3-butanediol to (3S)-acetoin, with much lower efficiency. Can also oxidize several primary alcohols such as glycerol, 1-2-pentanediol and 1,2-propanediol, with lower activity. Cannot use (2R,3R)-2,3-butanediol. In the presence of NADH, catalyzes the reduction of (3R)-acetoin to meso-2,3-butanediol, of (3S)-acetoin to (2S,3S)-2,3-butanediol and of diacetyl to (3S)-acetoin. No activity is detected with NADPH/NADP(+). The protein is Meso-2,3-butanediol dehydrogenase of Serratia marcescens.